The following is a 782-amino-acid chain: ATP-dependent 6-phosphofructokinase, muscle type (782 aa).

Thr2 carries the N-acetylthreonine modification. The interval 2–390 (THEEHHAAKT…NWEVYKLLAH (389 aa)) is N-terminal catalytic PFK domain 1. ATP-binding positions include Gly25, 88–89 (RC), and 118–121 (GDGS). Asp119 lines the Mg(2+) pocket. At Ser133 the chain carries Phosphoserine. Substrate is bound by residues 164–166 (SID), Arg201, 208–210 (MGR), Glu264, Arg292, and 298–301 (HVQR). Residue Asp166 is the Proton acceptor of the active site. Ser377 carries the phosphoserine modification. Residues 391–403 (IRPPVSKTSATMH) are interdomain linker. Positions 404–782 (TVAVMNVGAP…SRKRSGETSI (379 aa)) are C-terminal regulatory PFK domain 2. Residues Arg473 and 530–534 (TVSNN) contribute to the beta-D-fructose 2,6-bisphosphate site. Ser532 carries O-linked (GlcNAc) serine glycosylation. The residue at position 559 (Lys559) is an N6-(2-hydroxyisobutyryl)lysine. Beta-D-fructose 2,6-bisphosphate contacts are provided by residues Arg568, 575–577 (MGG), Glu631, Arg657, and 663–666 (HMQQ). The residue at position 669 (Ser669) is a Phosphoserine. Arg737 serves as a coordination point for beta-D-fructose 2,6-bisphosphate. Residue Ser777 is modified to Phosphoserine.

It belongs to the phosphofructokinase type A (PFKA) family. ATP-dependent PFK group I subfamily. Eukaryotic two domain clade 'E' sub-subfamily. As to quaternary structure, homo- and heterotetramers. Phosphofructokinase (PFK) enzyme functions as a tetramer composed of different combinations of 3 types of subunits, called PFKM (M), PFKL (L) and PFKP (P). The composition of the PFK tetramer differs according to the tissue type it is present in. The kinetic and regulatory properties of the tetrameric enzyme are dependent on the subunit composition, hence can vary across tissues. Interacts (via C-terminus) with HK1 (via N-terminal spermatogenic cell-specific region). Requires Mg(2+) as cofactor. In terms of processing, glcNAcylation decreases enzyme activity.

It is found in the cytoplasm. It catalyses the reaction beta-D-fructose 6-phosphate + ATP = beta-D-fructose 1,6-bisphosphate + ADP + H(+). The protein operates within carbohydrate degradation; glycolysis; D-glyceraldehyde 3-phosphate and glycerone phosphate from D-glucose: step 3/4. Its activity is regulated as follows. Allosterically activated by ADP, AMP, or fructose 2,6-bisphosphate, and allosterically inhibited by ATP or citrate. Functionally, catalyzes the phosphorylation of D-fructose 6-phosphate to fructose 1,6-bisphosphate by ATP, the first committing step of glycolysis. In Canis lupus familiaris (Dog), this protein is ATP-dependent 6-phosphofructokinase, muscle type (PFKM).